The following is a 390-amino-acid chain: MEEPGAQCAPPXPAGSETWVPQANLSSAPSQNCSAKDYIYQDSIALPWKVLLVMLLALITLATTLSNAFVIATVYRTRKLHTPANYLIASLAVTDLLVSILVMPISTMYTVTGRWTLGQVVCDFWLSSDITCCTASILHLCVIALDRYWAITDAVEYSAKRTPKRAAVMIALVWVFSISISLPPFFWRQAKAEEEVSECVVNTDHILYTVYSTVGAFYFPTLLLIALYGRIYVEARSRILKQTPNRTGKRLTRAQLITDSPGSTSSVTSINSRVPDVPSESGSPVYVNQVKVRVSDALLEKKKLMAARERKATKTLGIILGAFIVCWLPFFIISLVMPICKDACWFHLAIFDFFTWLGYLNSLINPIIYTMSNEDFKQAFHKLIRFKCTS.

Residues 1–46 (MEEPGAQCAPPXPAGSETWVPQANLSSAPSQNCSAKDYIYQDSIAL) lie on the Extracellular side of the membrane. Residues asparagine 24 and asparagine 32 are each glycosylated (N-linked (GlcNAc...) asparagine). Residues 47–72 (PWKVLLVMLLALITLATTLSNAFVIA) form a helical membrane-spanning segment. Topologically, residues 73–86 (TVYRTRKLHTPANY) are cytoplasmic. Residues 87–111 (LIASLAVTDLLVSILVMPISTMYTV) form a helical membrane-spanning segment. Residues 112-119 (TGRWTLGQ) lie on the Extracellular side of the membrane. Residues 120 to 145 (VVCDFWLSSDITCCTASILHLCVIAL) traverse the membrane as a helical segment. Cysteine 122 and cysteine 199 are joined by a disulfide. Ergotamine is bound by residues aspartate 129 and threonine 134. Residues 146–148 (DRY) carry the DRY motif; important for ligand-induced conformation changes and signaling motif. The Cytoplasmic portion of the chain corresponds to 146–165 (DRYWAITDAVEYSAKRTPKR). The chain crosses the membrane as a helical span at residues 166-184 (AAVMIALVWVFSISISLPP). The Extracellular portion of the chain corresponds to 185 to 205 (FFWRQAKAEEEVSECVVNTDH). Residue valine 201 participates in ergotamine binding. The helical transmembrane segment at 206 to 229 (ILYTVYSTVGAFYFPTLLLIALYG) threads the bilayer. Topologically, residues 230 to 315 (RIYVEARSRI…AARERKATKT (86 aa)) are cytoplasmic. Residues 259–272 (DSPGSTSSVTSINS) show a composition bias toward polar residues. The disordered stretch occupies residues 259–281 (DSPGSTSSVTSINSRVPDVPSES). The helical transmembrane segment at 316 to 337 (LGIILGAFIVCWLPFFIISLVM) threads the bilayer. The Extracellular portion of the chain corresponds to 338–347 (PICKDACWFH). A helical membrane pass occupies residues 348–370 (LAIFDFFTWLGYLNSLINPIIYT). The NPxxY motif; important for ligand-induced conformation changes and signaling signature appears at 365–369 (NPIIY). Residues 371 to 390 (MSNEDFKQAFHKLIRFKCTS) are Cytoplasmic-facing. Residue cysteine 388 is the site of S-palmitoyl cysteine attachment.

The protein belongs to the G-protein coupled receptor 1 family. As to quaternary structure, homodimer. Heterodimer with HTR1D. Post-translationally, phosphorylated. Desensitization of the receptor may be mediated by its phosphorylation. In terms of processing, palmitoylated.

Its subcellular location is the cell membrane. Functionally, G-protein coupled receptor for 5-hydroxytryptamine (serotonin). Also functions as a receptor for ergot alkaloid derivatives, various anxiolytic and antidepressant drugs and other psychoactive substances, such as lysergic acid diethylamide (LSD). Ligand binding causes a conformation change that triggers signaling via guanine nucleotide-binding proteins (G proteins) and modulates the activity of downstream effectors, such as adenylate cyclase. HTR1B is coupled to G(i)/G(o) G alpha proteins and mediates inhibitory neurotransmission by inhibiting adenylate cyclase activity. Arrestin family members inhibit signaling via G proteins and mediate activation of alternative signaling pathways. Regulates the release of 5-hydroxytryptamine, dopamine and acetylcholine in the brain, and thereby affects neural activity, nociceptive processing, pain perception, mood and behavior. Besides, plays a role in vasoconstriction of cerebral arteries. The sequence is that of 5-hydroxytryptamine receptor 1B (HTR1B) from Gorilla gorilla gorilla (Western lowland gorilla).